The primary structure comprises 133 residues: Napin-1 (133 aa).

Propeptides lie at residues proline 31–glycine 49 and proline 131–tyrosine 133.

The protein belongs to the 2S seed storage albumins family. The mature protein consists of a small and a large chain linked by disulfide bonds. As to expression, cotyledons and the axis.

In terms of biological role, the small, basic, water-soluble napins are one of the two major kinds of storage proteins synthesized in the seed during its maturation. The chain is Napin-1 from Brassica napus (Rape).